The primary structure comprises 93 residues: Small ribosomal subunit protein uS19 (93 aa).

It belongs to the universal ribosomal protein uS19 family.

Functionally, protein S19 forms a complex with S13 that binds strongly to the 16S ribosomal RNA. In Campylobacter fetus subsp. fetus (strain 82-40), this protein is Small ribosomal subunit protein uS19.